Consider the following 377-residue polypeptide: TraB domain-containing protein (377 aa).

Methionine 1 carries the post-translational modification N-acetylmethionine. A disordered region spans residues 1–34; the sequence is MEEPEEQPPHEADTEPVVTSGASEAVPRVLPGDP. The residue at position 65 (threonine 65) is a Phosphothreonine.

The sequence is that of TraB domain-containing protein (TRABD) from Bos taurus (Bovine).